The chain runs to 427 residues: A-kinase anchor protein 5 (427 aa).

The tract at residues 1–122 (METTISEIHV…DADLSKKKAK (122 aa)) is disordered. Residues 1–170 (METTISEIHV…LDIQTQTPLN (170 aa)) are essential to the intracellular anchoring function. Over residues 8–19 (IHVENKDEKRSA) the composition is skewed to basic and acidic residues. Ser-22 is modified (phosphoserine). Cys-36 carries the S-palmitoyl cysteine lipid modification. A compositionally biased stretch (basic residues) spans 37 to 48 (FKRRKKAAKALK). The AKAP CaM-binding motif lies at 76-96 (RGAWASLKRLVTRRKRSESSK). The span at 92-102 (SESSKQQKPLE) shows a compositional bias: basic and acidic residues. Cys-129 is lipidated: S-palmitoyl cysteine. Composition is skewed to polar residues over residues 171–182 (DQATKAKSTQDL) and 242–252 (VQPQQASPLET). Disordered regions lie at residues 171–205 (DQATKAKSTQDLSEGISRKDGDEVCESNVSNSTTS), 239–269 (KQDVQPQQASPLETSETDHQQPVLSDVPPLP), and 281–333 (SNST…EESK). Positions 302 to 333 (EETKPKDTELSQESDFKENGITEEKSKSEESK) are enriched in basic and acidic residues. Positions 392–405 (LIETASSLVKNAIQ) are PKA-RII subunit binding domain. The tract at residues 410 to 427 (QLVNEMASDDNKINNLLQ) is tethers NFATC2 to CRAC channels.

As to quaternary structure, binding protein for dimer of the RII-beta regulatory subunit of cAMP-dependent protein kinase (PKA) and also for the protein kinase C (PKC) and the phosphatase calcineurin (PP2B). Each enzyme is inhibited when bound to the anchoring protein. Also binds the beta2-adrenergic receptor. Part of a complex containing AKAP5, ADCY5, ADCY6 and PDE4C. Interacts with ADCY8, and enhances its phosphorylation at lipid rafts. Interacts with ORAI1 (isoform alpha) (via N-terminus) upon store depletion and in response to LTC4. Does not interact with ORAI2 and ORAI3 paralogs. Interacts (via leucine zipper domain) with NFATC2/NFAT1. Interacts with calmodulin; the interaction is calcium-independent. Interacts with KCNQ2; the interaction may help KCNQ2 channel complex to retain calcium-bound calmodulin. Interacts with KCNK2; the channel is recruited to postsynaptic microdomains by AKAP5 where it can integrate neurotransmitter receptor signals. Part of a complex composed of AKAP5 and ADRB2. Post-translationally, palmitoylated. Palmitoylation at Cys-36 and Cys-129 play a key role in the targeting of AKAP5 to lipid rafts. Palmitoylation by ZDHHC2 is required for AKAP5 function in LTP-stimulated recycling endosome exocytosis. In terms of tissue distribution, predominantly in the cerebral cortex and the postsynaptic densities of the forebrain, and to a lesser extent in adrenal medulla, lung and anterior pituitary.

It is found in the postsynaptic recycling endosome membrane. Its subcellular location is the cell projection. It localises to the dendrite. The protein resides in the postsynaptic cell membrane. Multivalent scaffold protein that anchors the cAMP-dependent protein kinase/PKA to cytoskeletal and/or organelle-associated proteins, targeting the signal carried by cAMP to specific intracellular effectors. Association with the beta2-adrenergic receptor (beta2-AR) not only regulates beta2-AR signaling pathway, but also the activation by PKA by switching off the beta2-AR signaling cascade. Plays a role in long term synaptic potentiation by regulating protein trafficking from the dendritic recycling endosomes to the plasma membrane and controlling both structural and functional plasticity at excitatory synapses. In hippocampal pyramidal neurons, recruits KCNK2/TREK-1 channel at postsynaptic dense bodies microdomains and converts it to a leak channel no longer sensitive to stimulation by arachidonic acid, acidic pH or mechanical stress, nor inhibited by Gq-coupled receptors but still under the negative control of Gs-coupled receptors. Associates with ORAI1 pore-forming subunit of CRAC channels in Ca(2+) signaling microdomains where it recruits NFATC2/NFAT1 and couples store-operated Ca(2+) influx to calmodulin and calcineurin signaling and activation of NFAT-dependent transcriptional responses. In Homo sapiens (Human), this protein is A-kinase anchor protein 5 (AKAP5).